A 177-amino-acid polypeptide reads, in one-letter code: Large ribosomal subunit protein uL6 (177 aa).

This sequence belongs to the universal ribosomal protein uL6 family. In terms of assembly, part of the 50S ribosomal subunit.

This protein binds to the 23S rRNA, and is important in its secondary structure. It is located near the subunit interface in the base of the L7/L12 stalk, and near the tRNA binding site of the peptidyltransferase center. This Edwardsiella ictaluri (strain 93-146) protein is Large ribosomal subunit protein uL6.